The sequence spans 578 residues: 2-succinyl-5-enolpyruvyl-6-hydroxy-3-cyclohexene-1-carboxylate synthase (578 aa).

This sequence belongs to the TPP enzyme family. MenD subfamily. As to quaternary structure, homodimer. Mg(2+) serves as cofactor. The cofactor is Mn(2+). It depends on thiamine diphosphate as a cofactor.

It carries out the reaction isochorismate + 2-oxoglutarate + H(+) = 5-enolpyruvoyl-6-hydroxy-2-succinyl-cyclohex-3-ene-1-carboxylate + CO2. The protein operates within quinol/quinone metabolism; 1,4-dihydroxy-2-naphthoate biosynthesis; 1,4-dihydroxy-2-naphthoate from chorismate: step 2/7. Its pathway is quinol/quinone metabolism; menaquinone biosynthesis. In terms of biological role, catalyzes the thiamine diphosphate-dependent decarboxylation of 2-oxoglutarate and the subsequent addition of the resulting succinic semialdehyde-thiamine pyrophosphate anion to isochorismate to yield 2-succinyl-5-enolpyruvyl-6-hydroxy-3-cyclohexene-1-carboxylate (SEPHCHC). The sequence is that of 2-succinyl-5-enolpyruvyl-6-hydroxy-3-cyclohexene-1-carboxylate synthase from Prosthecochloris aestuarii (strain DSM 271 / SK 413).